Consider the following 318-residue polypeptide: MRLFAFLWSSVAFLSTVQAQVSQTASQTQDDSSTPTPTPTDKYVNIADALRTKTPMATPNRTIMPTRQDPRATEPPTPEPTYLPTPSPTPAPTPDPGPWVAKWMDHDQVQPFKQPDPVTVSEKAAVKFKPQIHITNGCHPYPAVTWWGETSGGLKTKGAPSAGCKGSGWGSQVYGRSTWVKGVWAIMYSWYFPKDSPSTGLGHRHDWEHVIVWIDNPDIENPKILAVTPSAHSGYSKQVPPSADCVDGTSVKVKYESKWPINHALESTTEGGETQDLIMWNQLSENALRAMNSVTWGDANCPFCDGNFQAKLDKAWPF.

The first 19 residues, 1–19 (MRLFAFLWSSVAFLSTVQA), serve as a signal peptide directing secretion. Low complexity predominate over residues 23-41 (QTASQTQDDSSTPTPTPTD). 2 disordered regions span residues 23-42 (QTAS…PTDK) and 51-96 (RTKT…TPDP). Residues 55–65 (PMATPNRTIMP) are compositionally biased toward polar residues. N60 carries N-linked (GlcNAc...) asparagine glycosylation. The segment covering 73 to 96 (TEPPTPEPTYLPTPSPTPAPTPDP) has biased composition (pro residues). Positions 185–195 (AIMYSWYFPKD) match the Conserved undecapeptide motif I motif. The short motif at 202-208 (GHRHDWE) is the Hepta-peptide GHRHDWE motif II element.

Belongs to the Necrosis inducing protein (NPP1) family.

It localises to the secreted. Secreted effector that contributes moderately to virulence during infection by P.capsici. Does not cause visible reaction of C.annuum for several days after inoculation, but by 7 days after inoculation, small necrotic lesions become visible. Leads only to chlorotic areas, without necrosis at 7 days after non-host N.benthamiana leaves infection. In Phytophthora capsici, this protein is NLP effector protein 7.